We begin with the raw amino-acid sequence, 793 residues long: Neurobeachin (793 aa).

2 disordered regions span residues 68–92 (ENIKKGKKGNVSTISGLSSQTTGAK) and 685–793 (RETA…EILK). Composition is skewed to polar residues over residues 77-90 (NVSTISGLSSQTTG), 689-710 (RSGSQAGRNIRQEINSPTSTET), 750-762 (NILNGTDLETSTG), and 782-793 (ESLTESPSEILK).

The protein belongs to the WD repeat neurobeachin family. In terms of assembly, interacts with RII subunit of PKA. In terms of tissue distribution, forebrain and cerebellum.

It is found in the cytoplasm. The protein resides in the membrane. Binds to type II regulatory subunits of protein kinase A and anchors/targets them to the membrane. May anchor the kinase to cytoskeletal and/or organelle-associated proteins. This Gallus gallus (Chicken) protein is Neurobeachin (NBEA).